A 191-amino-acid chain; its full sequence is UPF0312 protein Sbal195_3198 (191 aa).

An N-terminal signal peptide occupies residues 1–22; it reads MKKQLFSALIGASLLAPMAASA.

This sequence belongs to the UPF0312 family. Type 1 subfamily.

It is found in the periplasm. This Shewanella baltica (strain OS195) protein is UPF0312 protein Sbal195_3198.